Reading from the N-terminus, the 819-residue chain is Zinc finger protein 27 (819 aa).

The KRAB domain maps to 1–75 (MDVTIDFSRE…KTLGAESCHD (75 aa)). The tract at residues 93-123 (PKRPRHWDPPEDEPKHSSDLQTHDESNGLKR) is disordered. Positions 98 to 120 (HWDPPEDEPKHSSDLQTHDESNG) are enriched in basic and acidic residues. 21 consecutive C2H2-type zinc fingers follow at residues 205–227 (YVCVECGKACSQTSEFLTHQKTH), 233–255 (YKCGDCGKSFFQVSSLFRHRRIH), 261–283 (YDCSHCGKGFSYNSDLRIHQKIH), 289–311 (HGCVDCGKAFTQKSTLRMHQKIH), 317–339 (YVCIECGQAFIQKTHLVAHRRIH), 345–367 (YACDGCGKAFLSKSQLLVHQRIH), 401–423 (SICAECGKAFTYRSELIIHQRTH), 429–451 (YQCGDCGKAFTQKSALTVHRRIH), 457–479 (YVCVKCGLAFVQRAHLDAHQVIH), 485–507 (YQCGHCGKFFTSKSQLHVHKRIH), 513–535 (YVCSNCGKAFANRSNLITHQKTH), 541–563 (YVCARCGKAFTQRSDLVTHQRIH), 569–591 (YGCSTCGKAFTQKSHLSIHEKIH), 597–619 (YGCRDCGKAFNQKSILIVHQKIH), 625–647 (HVCAECGRAFIRKSNFITHQRIH), 653–675 (YGCTDCGKSFTSKSQLLVHRPIH), 681–703 (YVCAECGKAFSGRSNLSKHQKTH), 709–731 (YACSECGKSFRQKSELITHHRIH), 737–759 (YDCGDCGKSFTKKSQLQVHQRIH), 765–787 (YRCAECGKAFTDRSNLNKHQTTH), and 793–815 (YKCVVCGKGFVQKSVLSIHENVH).

It belongs to the krueppel C2H2-type zinc-finger protein family.

It localises to the nucleus. May be involved in transcriptional regulation. The sequence is that of Zinc finger protein 27 (Zfp27) from Mus musculus (Mouse).